The chain runs to 125 residues: Large ribosomal subunit protein bL12 (125 aa).

This sequence belongs to the bacterial ribosomal protein bL12 family. Homodimer. Part of the ribosomal stalk of the 50S ribosomal subunit. Forms a multimeric L10(L12)X complex, where L10 forms an elongated spine to which 2 to 4 L12 dimers bind in a sequential fashion. Binds GTP-bound translation factors.

Forms part of the ribosomal stalk which helps the ribosome interact with GTP-bound translation factors. Is thus essential for accurate translation. This is Large ribosomal subunit protein bL12 from Dictyoglomus thermophilum (strain ATCC 35947 / DSM 3960 / H-6-12).